The sequence spans 686 residues: WD repeat-containing protein 93 (686 aa).

Positions 1–10 are enriched in polar residues; it reads MSFPRGSQTQ. Residues 1 to 40 are disordered; that stretch reads MSFPRGSQTQKIKHPIGTRKGPLEVPPPTEKDWPKDDEQD. A compositionally biased stretch (basic and acidic residues) spans 29-40; that stretch reads TEKDWPKDDEQD. The WD repeat unit spans residues 410-449; sequence PCAAPIAVSQLSCSSSYLVLACEDGVLTLWDLAKGFPLGV.

This Homo sapiens (Human) protein is WD repeat-containing protein 93 (WDR93).